The chain runs to 413 residues: Aspartate aminotransferase, cytoplasmic (413 aa).

L-aspartate contacts are provided by Gly39 and Trp141. Ser149 carries the phosphoserine modification. Asn195 is a binding site for L-aspartate. At Lys259 the chain carries N6-(pyridoxal phosphate)lysine. Arg387 contacts L-aspartate.

This sequence belongs to the class-I pyridoxal-phosphate-dependent aminotransferase family. In terms of assembly, homodimer. Pyridoxal 5'-phosphate serves as cofactor.

The protein resides in the cytoplasm. The catalysed reaction is L-aspartate + 2-oxoglutarate = oxaloacetate + L-glutamate. The enzyme catalyses L-cysteine + 2-oxoglutarate = 2-oxo-3-sulfanylpropanoate + L-glutamate. It catalyses the reaction (2S)-2-aminobutanoate + 2-oxoglutarate = 2-oxobutanoate + L-glutamate. It carries out the reaction 3-sulfino-L-alanine + 2-oxoglutarate = 3-sulfinopyruvate + L-glutamate. Functionally, biosynthesis of L-glutamate from L-aspartate or L-cysteine. Important regulator of levels of glutamate, the major excitatory neurotransmitter of the vertebrate central nervous system. Acts as a scavenger of glutamate in brain neuroprotection. The aspartate aminotransferase activity is involved in hepatic glucose synthesis during development and in adipocyte glyceroneogenesis. Using L-cysteine as substrate, regulates levels of mercaptopyruvate, an important source of hydrogen sulfide. Mercaptopyruvate is converted into H(2)S via the action of 3-mercaptopyruvate sulfurtransferase (3MST). Hydrogen sulfide is an important synaptic modulator and neuroprotectant in the brain. The polypeptide is Aspartate aminotransferase, cytoplasmic (Pan troglodytes (Chimpanzee)).